A 251-amino-acid polypeptide reads, in one-letter code: Carbohydrate deacetylase (251 aa).

The Mg(2+) site is built by H59 and H122.

Belongs to the YdjC deacetylase family. In terms of assembly, homodimer. Mg(2+) serves as cofactor.

Functionally, probably catalyzes the deacetylation of acetylated carbohydrates an important step in the degradation of oligosaccharides. The chain is Carbohydrate deacetylase from Vibrio parahaemolyticus serotype O3:K6 (strain RIMD 2210633).